We begin with the raw amino-acid sequence, 320 residues long: Phospho-N-acetylmuramoyl-pentapeptide-transferase (320 aa).

The next 9 membrane-spanning stretches (helical) occupy residues 5 to 25 (LWAL…LIKF), 51 to 71 (MGGL…GAAY), 76 to 96 (GVVA…IGGI), 124 to 144 (VVIM…IPMI), 145 to 165 (GTIN…VGWS), 176 to 196 (GLLA…AMHM), 198 to 218 (NHII…FLIF), 233 to 255 (LALG…LIWF), and 298 to 318 (WQID…GIFY).

It belongs to the glycosyltransferase 4 family. MraY subfamily. It depends on Mg(2+) as a cofactor.

It is found in the cell membrane. The catalysed reaction is UDP-N-acetyl-alpha-D-muramoyl-L-alanyl-gamma-D-glutamyl-L-lysyl-D-alanyl-D-alanine + di-trans,octa-cis-undecaprenyl phosphate = Mur2Ac(oyl-L-Ala-gamma-D-Glu-L-Lys-D-Ala-D-Ala)-di-trans,octa-cis-undecaprenyl diphosphate + UMP. Its pathway is cell wall biogenesis; peptidoglycan biosynthesis. Catalyzes the initial step of the lipid cycle reactions in the biosynthesis of the cell wall peptidoglycan: transfers peptidoglycan precursor phospho-MurNAc-pentapeptide from UDP-MurNAc-pentapeptide onto the lipid carrier undecaprenyl phosphate, yielding undecaprenyl-pyrophosphoryl-MurNAc-pentapeptide, known as lipid I. The polypeptide is Phospho-N-acetylmuramoyl-pentapeptide-transferase (Leuconostoc citreum (strain KM20)).